The sequence spans 181 residues: Sporozoite-associated mosquito saliva protein 1 (181 aa).

A signal peptide spans 1 to 24 (MNSSWRVVVFLGLVILCHSRRARA).

Salivary gland (at protein level). In terms of tissue distribution, (Microbial infection) Detected with Plasmodium berghei sporozoites isolated from the saliva of infected Anopheles gambiae mosquitoes (at protein level).

It localises to the secreted. Decreases host neutrophil chemotaxis induced by N-formylmethionine-leucyl-phenylalanine (fMLP). Functionally, (Microbial infection) Interacts with the surface of Plasmodium berghei sporozoites. Enhances sporozoite gliding activity. Enhances host hepatocyte traversal by sporozoites. This chain is Sporozoite-associated mosquito saliva protein 1, found in Anopheles gambiae (African malaria mosquito).